Here is a 29-residue protein sequence, read N- to C-terminus: Brevinin-2Ra (29 aa).

The cysteines at positions 23 and 29 are disulfide-linked.

Expressed by the skin glands.

It is found in the secreted. Its function is as follows. Antimicrobial peptide. This chain is Brevinin-2Ra, found in Pelophylax ridibundus (Marsh frog).